A 317-amino-acid chain; its full sequence is Acetyl-coenzyme A carboxylase carboxyl transferase subunit alpha (317 aa).

One can recognise a CoA carboxyltransferase C-terminal domain in the interval 39 to 293 (KLEDKNRKLT…KDALGASLER (255 aa)).

It belongs to the AccA family. In terms of assembly, acetyl-CoA carboxylase is a heterohexamer composed of biotin carboxyl carrier protein (AccB), biotin carboxylase (AccC) and two subunits each of ACCase subunit alpha (AccA) and ACCase subunit beta (AccD).

It is found in the cytoplasm. It carries out the reaction N(6)-carboxybiotinyl-L-lysyl-[protein] + acetyl-CoA = N(6)-biotinyl-L-lysyl-[protein] + malonyl-CoA. It participates in lipid metabolism; malonyl-CoA biosynthesis; malonyl-CoA from acetyl-CoA: step 1/1. Functionally, component of the acetyl coenzyme A carboxylase (ACC) complex. First, biotin carboxylase catalyzes the carboxylation of biotin on its carrier protein (BCCP) and then the CO(2) group is transferred by the carboxyltransferase to acetyl-CoA to form malonyl-CoA. In Chromohalobacter salexigens (strain ATCC BAA-138 / DSM 3043 / CIP 106854 / NCIMB 13768 / 1H11), this protein is Acetyl-coenzyme A carboxylase carboxyl transferase subunit alpha.